A 129-amino-acid chain; its full sequence is NADPH-dependent 7-cyano-7-deazaguanine reductase (129 aa).

Cys43 (thioimide intermediate) is an active-site residue. Residue Asp50 is the Proton donor of the active site. Residues 65 to 67 (VEL) and 84 to 85 (HE) each bind substrate.

This sequence belongs to the GTP cyclohydrolase I family. QueF type 1 subfamily.

The protein localises to the cytoplasm. It carries out the reaction 7-aminomethyl-7-carbaguanine + 2 NADP(+) = 7-cyano-7-deazaguanine + 2 NADPH + 3 H(+). The protein operates within tRNA modification; tRNA-queuosine biosynthesis. Catalyzes the NADPH-dependent reduction of 7-cyano-7-deazaguanine (preQ0) to 7-aminomethyl-7-deazaguanine (preQ1). This chain is NADPH-dependent 7-cyano-7-deazaguanine reductase, found in Aquifex aeolicus (strain VF5).